Reading from the N-terminus, the 238-residue chain is Ribonuclease PH (238 aa).

Residues Arg-86 and 124-126 contribute to the phosphate site; that span reads GTR.

It belongs to the RNase PH family. In terms of assembly, homohexameric ring arranged as a trimer of dimers.

The enzyme catalyses tRNA(n+1) + phosphate = tRNA(n) + a ribonucleoside 5'-diphosphate. In terms of biological role, phosphorolytic 3'-5' exoribonuclease that plays an important role in tRNA 3'-end maturation. Removes nucleotide residues following the 3'-CCA terminus of tRNAs; can also add nucleotides to the ends of RNA molecules by using nucleoside diphosphates as substrates, but this may not be physiologically important. Probably plays a role in initiation of 16S rRNA degradation (leading to ribosome degradation) during starvation. The chain is Ribonuclease PH from Shigella flexneri serotype 5b (strain 8401).